A 127-amino-acid polypeptide reads, in one-letter code: Translation initiation factor 5A (127 aa).

At lysine 35 the chain carries Hypusine.

The protein belongs to the eIF-5A family.

The protein localises to the cytoplasm. In terms of biological role, functions by promoting the formation of the first peptide bond. This is Translation initiation factor 5A (eIF5A) from Methanothrix thermoacetophila (strain DSM 6194 / JCM 14653 / NBRC 101360 / PT) (Methanosaeta thermophila).